The primary structure comprises 613 residues: Isocitrate dehydrogenase kinase/phosphatase (613 aa).

ATP contacts are provided by residues Ala-328 to Leu-334 and Lys-349. Residue Asp-384 is part of the active site.

The protein belongs to the AceK family.

It localises to the cytoplasm. It catalyses the reaction L-seryl-[isocitrate dehydrogenase] + ATP = O-phospho-L-seryl-[isocitrate dehydrogenase] + ADP + H(+). Its function is as follows. Bifunctional enzyme which can phosphorylate or dephosphorylate isocitrate dehydrogenase (IDH) on a specific serine residue. This is a regulatory mechanism which enables bacteria to bypass the Krebs cycle via the glyoxylate shunt in response to the source of carbon. When bacteria are grown on glucose, IDH is fully active and unphosphorylated, but when grown on acetate or ethanol, the activity of IDH declines drastically concomitant with its phosphorylation. The protein is Isocitrate dehydrogenase kinase/phosphatase of Cupriavidus necator (strain ATCC 17699 / DSM 428 / KCTC 22496 / NCIMB 10442 / H16 / Stanier 337) (Ralstonia eutropha).